The following is a 242-amino-acid chain: tRNA pseudouridine synthase A (242 aa).

The Nucleophile role is filled by D51. Y107 contributes to the substrate binding site.

The protein belongs to the tRNA pseudouridine synthase TruA family. Homodimer.

The catalysed reaction is uridine(38/39/40) in tRNA = pseudouridine(38/39/40) in tRNA. Its function is as follows. Formation of pseudouridine at positions 38, 39 and 40 in the anticodon stem and loop of transfer RNAs. The chain is tRNA pseudouridine synthase A from Helicobacter pylori (strain Shi470).